The primary structure comprises 147 residues: Small ribosomal subunit protein uS12 (147 aa).

This sequence belongs to the universal ribosomal protein uS12 family. In terms of assembly, part of the 30S ribosomal subunit.

In terms of biological role, with S4 and S5 plays an important role in translational accuracy. Located at the interface of the 30S and 50S subunits. In Methanococcus maripaludis (strain C5 / ATCC BAA-1333), this protein is Small ribosomal subunit protein uS12.